The primary structure comprises 336 residues: Aspartate--ammonia ligase (336 aa).

It belongs to the class-II aminoacyl-tRNA synthetase family. AsnA subfamily.

The protein localises to the cytoplasm. The catalysed reaction is L-aspartate + NH4(+) + ATP = L-asparagine + AMP + diphosphate + H(+). Its pathway is amino-acid biosynthesis; L-asparagine biosynthesis; L-asparagine from L-aspartate (ammonia route): step 1/1. The sequence is that of Aspartate--ammonia ligase from Clostridium perfringens (strain ATCC 13124 / DSM 756 / JCM 1290 / NCIMB 6125 / NCTC 8237 / Type A).